The chain runs to 27 residues: Caerulein precursor fragment R1 (27 aa).

As to expression, expressed by the skin glands.

The protein resides in the secreted. Functionally, antimicrobial peptide. This is Caerulein precursor fragment R1 from Xenopus ruwenzoriensis (Uganda clawed frog).